Here is a 191-residue protein sequence, read N- to C-terminus: uncharacterized protein (191 aa).

This is an uncharacterized protein from Bacillus subtilis (strain 168).